A 739-amino-acid chain; its full sequence is Probable beta-glucosidase L (739 aa).

Residues 1–17 form the signal peptide; it reads MQNLFLSLLAAAVTVHA. An N-linked (GlcNAc...) asparagine glycan is attached at Asn224. Asp252 is an active-site residue. N-linked (GlcNAc...) asparagine glycosylation is present at Asn398.

The protein belongs to the glycosyl hydrolase 3 family.

The protein localises to the secreted. The catalysed reaction is Hydrolysis of terminal, non-reducing beta-D-glucosyl residues with release of beta-D-glucose.. The protein operates within glycan metabolism; cellulose degradation. Beta-glucosidases are one of a number of cellulolytic enzymes involved in the degradation of cellulosic biomass. Catalyzes the last step releasing glucose from the inhibitory cellobiose. The protein is Probable beta-glucosidase L (bglL) of Neosartorya fischeri (strain ATCC 1020 / DSM 3700 / CBS 544.65 / FGSC A1164 / JCM 1740 / NRRL 181 / WB 181) (Aspergillus fischerianus).